A 154-amino-acid chain; its full sequence is Superoxide dismutase [Cu-Zn] (154 aa).

Positions 47, 49, and 64 each coordinate Cu cation. A disulfide bridge links cysteine 58 with cysteine 147. Residues histidine 64, histidine 72, histidine 81, and aspartate 84 each contribute to the Zn(2+) site. Position 121 (histidine 121) interacts with Cu cation.

It belongs to the Cu-Zn superoxide dismutase family. Homodimer. Cu cation serves as cofactor. Requires Zn(2+) as cofactor.

The protein localises to the cytoplasm. It catalyses the reaction 2 superoxide + 2 H(+) = H2O2 + O2. In terms of biological role, destroys radicals which are normally produced within the cells and which are toxic to biological systems. This chain is Superoxide dismutase [Cu-Zn] (SODCC), found in Pinus sylvestris (Scotch pine).